Consider the following 139-residue polypeptide: ATP synthase epsilon chain (139 aa).

Belongs to the ATPase epsilon chain family. F-type ATPases have 2 components, CF(1) - the catalytic core - and CF(0) - the membrane proton channel. CF(1) has five subunits: alpha(3), beta(3), gamma(1), delta(1), epsilon(1). CF(0) has three main subunits: a, b and c.

Its subcellular location is the cell membrane. Its function is as follows. Produces ATP from ADP in the presence of a proton gradient across the membrane. This chain is ATP synthase epsilon chain, found in Streptococcus sanguinis.